The primary structure comprises 195 residues: CASP-like protein 1B1 (195 aa).

Residues Met-1–Leu-25 lie on the Cytoplasmic side of the membrane. Residues Ile-26 to Ile-46 traverse the membrane as a helical segment. The Extracellular portion of the chain corresponds to Met-47–Pro-78. The helical transmembrane segment at Ala-79–Val-99 threads the bilayer. Residues Thr-100 to His-114 lie on the Cytoplasmic side of the membrane. A helical membrane pass occupies residues Leu-115–Ala-135. The Extracellular segment spans residues Gln-136–His-160. The helical transmembrane segment at Gly-161 to Leu-181 threads the bilayer. The Cytoplasmic portion of the chain corresponds to Ser-182–Gln-195.

Belongs to the Casparian strip membrane proteins (CASP) family. In terms of assembly, homodimer and heterodimers.

The protein resides in the cell membrane. This Oryza sativa subsp. indica (Rice) protein is CASP-like protein 1B1.